Here is a 383-residue protein sequence, read N- to C-terminus: Transposase InsI for insertion sequence element IS30A (383 aa).

The Integrase catalytic domain maps to 213-379 (VNGTPIHERS…TPKEIIERGV (167 aa)).

The protein belongs to the transposase IS30 family.

Functionally, required for the transposition of the insertion element. This is Transposase InsI for insertion sequence element IS30A (insI1) from Escherichia coli (strain K12).